Reading from the N-terminus, the 233-residue chain is Gamma-interferon-responsive lysosomal thiol protein (233 aa).

Residues 1 to 26 form the signal peptide; the sequence is MVSSSLTKLVFFGCLLLLTFTDNLVA. A disulfide bond links Cys42 and Cys45. N-linked (GlcNAc...) asparagine glycosylation is found at Asn80 and Asn207. A propeptide spans 200–233 (removed in mature form); the sequence is TTLPKVCNSSASMSKSPERKWKLQVSYANKATNY.

It belongs to the GILT family. As to quaternary structure, dimer; disulfide-linked. As to expression, expressed in the outer integument of seed coat.

It is found in the secreted. The protein resides in the lysosome. Functionally, lysosomal thiol reductase that can reduce protein disulfide bonds. May facilitate the complete unfolding of proteins destined for lysosomal degradation. This is Gamma-interferon-responsive lysosomal thiol protein from Arabidopsis thaliana (Mouse-ear cress).